The chain runs to 707 residues: Ribosomal RNA large subunit methyltransferase K/L (707 aa).

In terms of domain architecture, THUMP spans 44–155 (VIYNLCLWSR…NDILTVSFDL (112 aa)).

This sequence belongs to the methyltransferase superfamily. RlmKL family.

Its subcellular location is the cytoplasm. It carries out the reaction guanosine(2445) in 23S rRNA + S-adenosyl-L-methionine = N(2)-methylguanosine(2445) in 23S rRNA + S-adenosyl-L-homocysteine + H(+). The catalysed reaction is guanosine(2069) in 23S rRNA + S-adenosyl-L-methionine = N(2)-methylguanosine(2069) in 23S rRNA + S-adenosyl-L-homocysteine + H(+). In terms of biological role, specifically methylates the guanine in position 2445 (m2G2445) and the guanine in position 2069 (m7G2069) of 23S rRNA. In Legionella pneumophila (strain Lens), this protein is Ribosomal RNA large subunit methyltransferase K/L.